Here is a 485-residue protein sequence, read N- to C-terminus: Aerolysin-5 (485 aa).

The N-terminal stretch at 1–23 is a signal peptide; the sequence is MQKLKITGLSLIISGLLMAQRHA. Cystine bridges form between Cys-42–Cys-98 and Cys-182–Cys-187. An interaction with host N-linked glycan region spans residues 68-84; that stretch reads WQISGLANGWVIMGPVY. The interval 256 to 288 is part of the transmembrane beta-barrel after proteolytic activation of the toxin and insertion into the host membrane; that stretch reads YGLSEKVTTKNKFKWPLVGETELSIEIAANQSW. Residues 346–355 are interaction with glycans from host GPI-anchor; sequence RWGGNAWYTH. Positions 446 to 485 are excised as a propeptide; sequence AADGKAPRALSARRGEQGLRLAIPLECRKSSPGLASATSA.

Belongs to the aerolysin family. Homodimer in solution; homoheptamer in the host membrane. After binding to GPI-anchored proteins in target membranes and proteolytic removal of the C-terminal propeptide, the protein assembles into a heptameric pre-pore complex. A further conformation change leads to insertion into the host membrane. Proteolytic cleavage and subsequent release of the propeptide trigger a major conformation change, leading to the formation of a heptameric pre-pore that then inserts into the host membrane.

It localises to the secreted. The protein localises to the host cell membrane. In terms of biological role, secreted, cytolytic toxin that forms pores in host membranes after proteolytic removal of a C-terminal propeptide, leading to destruction of the membrane permeability barrier and cell death. The pores are formed by transmembrane beta-strands and are approximately 3 nm in diameter. This chain is Aerolysin-5 (ahh5), found in Aeromonas hydrophila.